The primary structure comprises 628 residues: TLHDKQIRVCHLFEQLSSATVIGDGDKHKHSDRLKNVGKLQPGAIFSCFHPDHLEEARHLYEVFWEAGDFNDFIEIAKEARTFVNEGLFAFAAEVAVLHRDDCKGLYVPPVQEIFPDKFIPSAAINEAFKKAHVRPEFDESPILVDVQDTGNILDPEYRLAYYREDVGINAHHWHWHLVYPSTWNPKYFGKKKDRKGELFYYMHQQMCARYDCERLSNGMHRMLPFNNFDEPLAGYAPHLTHVASGKYYSPRPDGLKLRDLGDIEISEMVRMRERILDSIHLGYVISEDGSHKTLDELHGTDILGALVESSYESVNHEYYGNLHNWGHVTMARIHDPDGRFHEEPGVMSDTSTSLRDPIFYNWHRFIDNIFHEYKNTLKPYDHDVLNFPDIQVQDVTLHARVDNVVHFTMREQELELKHGINPGNARSIKARYYHLDHEPFSYAVNVQNNSASDKHATVRIFLAPKYDELGNEIKADELRRTAIELDKFKTDLHPGKNTVVRHSLDSSVTLSHQPTFEDLLHGVGLNEHKSEYCSCGWPSHLLVPKGNIKGMEYHLFVMLTDWDKDKVDGSESVACVDAVSYCGARDHKYPDKKPMGFPFDRPIHTEHISDFLTNNMFIKDIKIKFHE.

Residue T1 is modified to Blocked amino end (Thr); partial. Cu cation is bound by residues H173, H177, H204, H324, H328, and H364. The N-linked (GlcNAc...) asparagine glycan is linked to N449. Disulfide bonds link C534-C576 and C536-C583.

Belongs to the tyrosinase family. Hemocyanin subfamily. Hexamer or a multiple thereof. As to expression, hemolymph.

It localises to the secreted. It is found in the extracellular space. Functionally, hemocyanins are copper-containing oxygen carriers occurring freely dissolved in the hemolymph of many mollusks and arthropods. The sequence is that of Hemocyanin II from Limulus polyphemus (Atlantic horseshoe crab).